The sequence spans 434 residues: D-amino acid dehydrogenase (434 aa).

3 to 17 serves as a coordination point for FAD; that stretch reads VLVLGSGVIGTASAY.

This sequence belongs to the DadA oxidoreductase family. Requires FAD as cofactor.

The enzyme catalyses a D-alpha-amino acid + A + H2O = a 2-oxocarboxylate + AH2 + NH4(+). It functions in the pathway amino-acid degradation; D-alanine degradation; NH(3) and pyruvate from D-alanine: step 1/1. Functionally, oxidative deamination of D-amino acids. The polypeptide is D-amino acid dehydrogenase (Pseudomonas putida (strain GB-1)).